We begin with the raw amino-acid sequence, 1465 residues long: DNA polymerase III PolC-type (1465 aa).

The region spanning 427 to 583 (YVVFDVETTG…YDAEATGRLL (157 aa)) is the Exonuclease domain.

This sequence belongs to the DNA polymerase type-C family. PolC subfamily.

It localises to the cytoplasm. It carries out the reaction DNA(n) + a 2'-deoxyribonucleoside 5'-triphosphate = DNA(n+1) + diphosphate. In terms of biological role, required for replicative DNA synthesis. This DNA polymerase also exhibits 3' to 5' exonuclease activity. The sequence is that of DNA polymerase III PolC-type from Streptococcus pyogenes serotype M5 (strain Manfredo).